The sequence spans 114 residues: T cell receptor beta variable 10-2 (114 aa).

Residues 1 to 21 (MGTRLFFYVALCLLWAGHRDA) form the signal peptide. The region spanning 22 to 114 (GITQSPRYKI…TSVYFCASSE (93 aa)) is the Ig-like domain. An intrachain disulfide couples Cys-42 to Cys-110.

Alpha-beta TR is a heterodimer composed of an alpha and beta chain; disulfide-linked. The alpha-beta TR is associated with the transmembrane signaling CD3 coreceptor proteins to form the TR-CD3 (TcR or TCR). The assembly of alpha-beta TR heterodimers with CD3 occurs in the endoplasmic reticulum where a single alpha-beta TR heterodimer associates with one CD3D-CD3E heterodimer, one CD3G-CD3E heterodimer and one CD247 homodimer forming a stable octameric structure. CD3D-CD3E and CD3G-CD3E heterodimers preferentially associate with TR alpha and TR beta chains, respectively. The association of the CD247 homodimer is the last step of TcR assembly in the endoplasmic reticulum and is required for transport to the cell surface.

The protein resides in the cell membrane. Functionally, v region of the variable domain of T cell receptor (TR) beta chain that participates in the antigen recognition. Alpha-beta T cell receptors are antigen specific receptors which are essential to the immune response and are present on the cell surface of T lymphocytes. Recognize peptide-major histocompatibility (MH) (pMH) complexes that are displayed by antigen presenting cells (APC), a prerequisite for efficient T cell adaptive immunity against pathogens. Binding of alpha-beta TR to pMH complex initiates TR-CD3 clustering on the cell surface and intracellular activation of LCK that phosphorylates the ITAM motifs of CD3G, CD3D, CD3E and CD247 enabling the recruitment of ZAP70. In turn ZAP70 phosphorylates LAT, which recruits numerous signaling molecules to form the LAT signalosome. The LAT signalosome propagates signal branching to three major signaling pathways, the calcium, the mitogen-activated protein kinase (MAPK) kinase and the nuclear factor NF-kappa-B (NF-kB) pathways, leading to the mobilization of transcription factors that are critical for gene expression and essential for T cell growth and differentiation. The T cell repertoire is generated in the thymus, by V-(D)-J rearrangement. This repertoire is then shaped by intrathymic selection events to generate a peripheral T cell pool of self-MH restricted, non-autoaggressive T cells. Post-thymic interaction of alpha-beta TR with the pMH complexes shapes TR structural and functional avidity. The chain is T cell receptor beta variable 10-2 from Homo sapiens (Human).